The sequence spans 730 residues: Acetylene hydratase (730 aa).

Residues Cys-9 and Cys-12 each coordinate [4Fe-4S] cluster. Residue Asp-13 is part of the active site. Positions 16 and 46 each coordinate [4Fe-4S] cluster. W-bis(molybdopterin guanine dinucleotide) is bound by residues Lys-48, 111 to 114 (TEIN), Cys-141, 172 to 173 (KN), 177 to 179 (HNW), 199 to 202 (LDPR), 218 to 221 (YGTD), Ser-296, Gln-300, 416 to 418 (ASN), 422 to 423 (GY), 442 to 444 (YDQ), Asp-460, Arg-465, 602 to 613 (FAGLREDSNFQS), Arg-606, His-676, Asp-699, and Arg-720.

The protein belongs to the prokaryotic molybdopterin-containing oxidoreductase family. Monomer. Requires [4Fe-4S] cluster as cofactor. It depends on W-bis(molybdopterin guanine dinucleotide) as a cofactor.

It catalyses the reaction acetaldehyde = acetylene + H2O. Its function is as follows. Catalyzes the hydration of acetylene to form acetaldehyde. Ethylene cannot act as a substrate. The protein is Acetylene hydratase of Syntrophotalea acetylenica (Pelobacter acetylenicus).